The primary structure comprises 732 residues: Formin-homology and zinc finger domains protein 1 (732 aa).

Low complexity-rich tracts occupy residues 1-12, 19-45, 121-137, and 240-251; these read MMLASSAPTAPS, QPSA…SDAS, QQQQ…QSSS, and SSPKSPTSPTQP. Residues 1 to 27 form the signal peptide; it reads MMLASSAPTAPSLLPPSSQPSAATTRA. 3 disordered regions span residues 1 to 45, 121 to 141, and 232 to 267; these read MMLA…SDAS, QQQQ…SDRK, and RGRP…RRNT. Residues 256-267 show a composition bias toward polar residues; that stretch reads SQASSLPSRRNT. In terms of domain architecture, FH2 spans 355 to 732; the sequence is PISLSSSIIP…DDHHINVSSP (378 aa).

The protein belongs to the formin homology family. Transiently expressed in all mesoderm derived progenitor body wall muscle cells before they differentiate.

Acts redundantly with hlh-1 to promote body wall muscle cell and coelomocyte specification in postembryonic mesoderm progenitors, probably through suppression of sem-2. This is Formin-homology and zinc finger domains protein 1 from Caenorhabditis elegans.